We begin with the raw amino-acid sequence, 292 residues long: MTEFDLSTREGRWKHFGSVDPIEGTKPTIKEEMKDLQSTHKNFLFEIEEVGIKNLVYPVLVDRFQTAGNFSFSTSLNLDEKGINMSRILESVEKHYHNGIELDFDALYQLLRSLQERMNQNAAGLDVSAKWFFDRFSPITQIKAVGHADVTYGLAIDKQNVTRKEITIEAAVTTLCPCSKEISEYSAHNQRGIVTVKAYINKDIELIDNYKDVILDAMEANASSILYPILKRPDEKSVTERAYENPRFVEDLIRLIAADLVDFDWLDGFDIECRNEESIHQHDAFAKLKYRK.

Belongs to the GTP cyclohydrolase IV family.

The catalysed reaction is GTP + H2O = 7,8-dihydroneopterin 3'-triphosphate + formate + H(+). It participates in cofactor biosynthesis; 7,8-dihydroneopterin triphosphate biosynthesis; 7,8-dihydroneopterin triphosphate from GTP: step 1/1. In terms of biological role, converts GTP to 7,8-dihydroneopterin triphosphate. The sequence is that of GTP cyclohydrolase FolE2 from Staphylococcus saprophyticus subsp. saprophyticus (strain ATCC 15305 / DSM 20229 / NCIMB 8711 / NCTC 7292 / S-41).